The primary structure comprises 366 residues: Isocitrate dehydrogenase [NAD] subunit alpha, mitochondrial (366 aa).

Residues 1–27 (MAGPAWISKVSRLLGAFHNQKQVTRGF) constitute a mitochondrion transit peptide. Lys77 is modified (N6-succinyllysine). Thr101 carries the phosphothreonine modification. Positions 115, 125, and 146 each coordinate substrate. Position 223 is an N6-acetyllysine (Lys223). Positions 233, 257, and 261 each coordinate Mg(2+). Residue Lys343 is modified to N6-acetyllysine; alternate. N6-succinyllysine; alternate is present on Lys343. The residue at position 350 (Lys350) is an N6-succinyllysine.

It belongs to the isocitrate and isopropylmalate dehydrogenases family. Heterooligomer of subunits alpha (IDH3A), beta (IDH3B), and gamma (IDH3G) in the apparent ratio of 2:1:1. The heterodimer containing one IDH3A and one IDH3B subunit and the heterodimer containing one IDH3A and one IDH3G subunit assemble into a heterotetramer (which contains two subunits of IDH3A, one of IDH3B and one of IDH3G) and further into the heterooctamer. Mg(2+) serves as cofactor. It depends on Mn(2+) as a cofactor.

The protein localises to the mitochondrion. The enzyme catalyses D-threo-isocitrate + NAD(+) = 2-oxoglutarate + CO2 + NADH. Its activity is regulated as follows. The heterotetramer and the heterodimer composed of IDH3A and IDH3G subunits can be allosterically activated by citrate (CIT) or/and ADP, and the two activators can act independently or synergistically. The heterodimer composed of IDH3A and IDH3B subunits cannot be allosterically regulated and the allosteric regulation of the heterotetramer is through the IDH3G subunit and not the IDH3B subunit. The IDH3G subunit contains the allosteric site which consists of a CIT-binding site and an ADP-binding site, and the binding of CIT and ADP causes conformational changes at the allosteric site which are transmitted to the active site in the catalytic subunit (IDH3A) through a cascade of conformational changes at the heterodimer interface, leading to stabilization of the isocitrate-binding at the active site and thus activation of the enzyme. ATP can activate the heterotetramer and the heterodimer composed of IDH3A and IDH3G subunits at low concentrations but inhibits their activities at high concentrations, whereas ATP exhibits only inhibitory effect on the heterodimer composed of IDH3A and IDH3B subunits. In terms of biological role, catalytic subunit of the enzyme which catalyzes the decarboxylation of isocitrate (ICT) into alpha-ketoglutarate. The heterodimer composed of the alpha (IDH3A) and beta (IDH3B) subunits and the heterodimer composed of the alpha (IDH3A) and gamma (IDH3G) subunits, have considerable basal activity but the full activity of the heterotetramer (containing two subunits of IDH3A, one of IDH3B and one of IDH3G) requires the assembly and cooperative function of both heterodimers. In Bos taurus (Bovine), this protein is Isocitrate dehydrogenase [NAD] subunit alpha, mitochondrial.